Here is a 426-residue protein sequence, read N- to C-terminus: Diaminobutyrate--2-oxoglutarate transaminase (426 aa).

The residue at position 274 (K274) is an N6-(pyridoxal phosphate)lysine.

The protein belongs to the class-III pyridoxal-phosphate-dependent aminotransferase family. It depends on pyridoxal 5'-phosphate as a cofactor.

The catalysed reaction is L-2,4-diaminobutanoate + 2-oxoglutarate = L-aspartate 4-semialdehyde + L-glutamate. The protein operates within amine and polyamine biosynthesis; ectoine biosynthesis; L-ectoine from L-aspartate 4-semialdehyde: step 1/3. Its function is as follows. Catalyzes reversively the conversion of L-aspartate beta-semialdehyde (ASA) to L-2,4-diaminobutyrate (DABA) by transamination with L-glutamate. The sequence is that of Diaminobutyrate--2-oxoglutarate transaminase (ectB) from Oceanobacillus iheyensis (strain DSM 14371 / CIP 107618 / JCM 11309 / KCTC 3954 / HTE831).